The chain runs to 968 residues: Bifunctional glyoxylate cycle protein (968 aa).

The interval 1 to 443 (MSSAAKNFYQ…AVASQDEEIL (443 aa)) is isocitrate lyase. Residues 444–968 (SLTAQNVAGD…AYDRLVSEGY (525 aa)) form a malate synthase region. R601 functions as the Proton acceptor in the catalytic mechanism. D881 acts as the Proton donor in catalysis.

The protein in the N-terminal section; belongs to the isocitrate lyase/PEP mutase superfamily. Isocitrate lyase family. This sequence in the C-terminal section; belongs to the malate synthase family. As to expression, intestinal and body wall muscle cells.

The enzyme catalyses D-threo-isocitrate = glyoxylate + succinate. The catalysed reaction is glyoxylate + acetyl-CoA + H2O = (S)-malate + CoA + H(+). It functions in the pathway carbohydrate metabolism; glyoxylate cycle; (S)-malate from isocitrate: step 1/2. It participates in carbohydrate metabolism; glyoxylate cycle; (S)-malate from isocitrate: step 2/2. In Caenorhabditis elegans, this protein is Bifunctional glyoxylate cycle protein (icl-1).